Here is a 471-residue protein sequence, read N- to C-terminus: 7-dehydrocholesterol reductase (471 aa).

8 helical membrane passes run 36 to 56, 95 to 115, 144 to 164, 173 to 193, 233 to 253, 262 to 282, 302 to 322, and 327 to 347; these read LVSV…FIMA, LYAL…DFCH, LQAW…LSWF, WIPL…FAMI, LFFN…SFAA, VTNS…DFFW, LGWG…LYLV, and QLST…YYIF. NADP(+) is bound by residues lysine 354, arginine 358, leucine 391, tryptophan 396, and 403–404; that span reads NY. A helical transmembrane segment spans residues 416 to 436; that stretch reads LACGGGHLLPYFYIIYMTILL. Residues aspartate 443, 447–451, and tyrosine 458 contribute to the NADP(+) site; that span reads CANKY.

It belongs to the ERG4/ERG24 family. As to quaternary structure, interacts with DHCR24; this interaction regulates DHCR7 activity. Interacts with TMEM147. As to expression, highest expression is detected in liver, followed by kidney and brain.

The protein resides in the endoplasmic reticulum membrane. The enzyme catalyses cholesterol + NADP(+) = 7-dehydrocholesterol + NADPH + H(+). The catalysed reaction is 7-dehydrodesmosterol + NADPH + H(+) = desmosterol + NADP(+). It carries out the reaction 5,6alpha-epoxy-5alpha-cholestan-3beta-ol + H2O = 5alpha-cholestane-3beta,5,6beta-triol. It catalyses the reaction 5,6beta-epoxy-5beta-cholestan-3beta-ol + H2O = 5alpha-cholestane-3beta,5,6beta-triol. It participates in steroid biosynthesis; cholesterol biosynthesis. Its function is as follows. Oxidoreductase that catalyzes the last step of the cholesterol synthesis pathway, which transforms cholesta-5,7-dien-3beta-ol (7-dehydrocholesterol,7-DHC) into cholesterol by reducing the C7-C8 double bond of its sterol core. Can also metabolize cholesta-5,7,24-trien-3beta-ol (7-dehydrodemosterol, 7-DHD) to desmosterol, which is then metabolized by the Delta(24)-sterol reductase (DHCR24) to cholesterol. Modulates ferroptosis (a form of regulated cell death driven by iron-dependent lipid peroxidation) through the metabolic breakdown of the anti-ferroptotic metabolites 7-DHC and 7-DHD which, when accumulated, divert the propagation of peroxyl radical-mediated damage from phospholipid components to its sterol core, protecting plasma and mitochondrial membranes from phospholipid autoxidation. Functionally, component of the microsomal antiestrogen binding site (AEBS), a multiproteic complex at the ER membrane that consists of an association between cholestenol Delta-isomerase/EBP and DHCR7. This complex is responsible for cholesterol-5,6-epoxide hydrolase (ChEH) activity, which consists in the hydration of cholesterol-5,6-epoxides (5,6-EC) into cholestane-3beta,5alpha,6beta-triol (CT). The precise role of each component of this complex has not been described yet. In Rattus norvegicus (Rat), this protein is 7-dehydrocholesterol reductase (Dhcr7).